Reading from the N-terminus, the 138-residue chain is Putative pre-16S rRNA nuclease (138 aa).

It belongs to the YqgF nuclease family.

Its subcellular location is the cytoplasm. Could be a nuclease involved in processing of the 5'-end of pre-16S rRNA. The chain is Putative pre-16S rRNA nuclease from Salmonella typhimurium (strain LT2 / SGSC1412 / ATCC 700720).